Reading from the N-terminus, the 263-residue chain is UPF0739 protein C1orf74 homolog (263 aa).

This sequence belongs to the UPF0739 family.

In Mus musculus (Mouse), this protein is UPF0739 protein C1orf74 homolog.